Here is a 203-residue protein sequence, read N- to C-terminus: Small ribosomal subunit protein uS4c (203 aa).

A disordered region spans residues 19-43 (PGLTNKSPKAGSDLRKQPRSRKKSQ). The 64-residue stretch at 89-152 (MRLDNILFRL…KSRTLIQNSL (64 aa)) folds into the S4 RNA-binding domain.

This sequence belongs to the universal ribosomal protein uS4 family. In terms of assembly, part of the 30S ribosomal subunit. Contacts protein S5. The interaction surface between S4 and S5 is involved in control of translational fidelity.

Its subcellular location is the plastid. The protein localises to the chloroplast. One of the primary rRNA binding proteins, it binds directly to 16S rRNA where it nucleates assembly of the body of the 30S subunit. Its function is as follows. With S5 and S12 plays an important role in translational accuracy. The protein is Small ribosomal subunit protein uS4c (rps4) of Jasminum nudiflorum (Winter jasmine).